A 691-amino-acid polypeptide reads, in one-letter code: Elongation factor G (691 aa).

One can recognise a tr-type G domain in the interval 8 to 282 (ERVRNIGIAA…AVVDYLPAPV (275 aa)). Residues 17-24 (AHIDAGKT), 81-85 (DTPGH), and 135-138 (NKMD) each bind GTP.

The protein belongs to the TRAFAC class translation factor GTPase superfamily. Classic translation factor GTPase family. EF-G/EF-2 subfamily.

It is found in the cytoplasm. In terms of biological role, catalyzes the GTP-dependent ribosomal translocation step during translation elongation. During this step, the ribosome changes from the pre-translocational (PRE) to the post-translocational (POST) state as the newly formed A-site-bound peptidyl-tRNA and P-site-bound deacylated tRNA move to the P and E sites, respectively. Catalyzes the coordinated movement of the two tRNA molecules, the mRNA and conformational changes in the ribosome. The protein is Elongation factor G of Prochlorococcus marinus (strain AS9601).